A 289-amino-acid polypeptide reads, in one-letter code: ATP synthase gamma chain (289 aa).

It belongs to the ATPase gamma chain family. In terms of assembly, F-type ATPases have 2 components, CF(1) - the catalytic core - and CF(0) - the membrane proton channel. CF(1) has five subunits: alpha(3), beta(3), gamma(1), delta(1), epsilon(1). CF(0) has three main subunits: a, b and c.

The protein localises to the cell inner membrane. Functionally, produces ATP from ADP in the presence of a proton gradient across the membrane. The gamma chain is believed to be important in regulating ATPase activity and the flow of protons through the CF(0) complex. This chain is ATP synthase gamma chain, found in Erwinia tasmaniensis (strain DSM 17950 / CFBP 7177 / CIP 109463 / NCPPB 4357 / Et1/99).